A 682-amino-acid chain; its full sequence is MTAVSLSDGTAVLKTDPWLEPFSGALRERYAAYQKQRTIIEEHEGGLAEFSKGYKSMGFQIDKNGGVRYREWASNATEARLIGEFNNWSHTANPMTKSPFGVWECYVPPVSPGVCAIPHDSMVKISMTLPGGESIDRIPTWITRVTQDLNISPIYDGRFWNPPKEQQYQFKHGHSTRPVEGLKIYEAHVGISSPNMRVTTYKEFEVDVLPKIKQLGYNCIQMMAIMEHAYYASFGYQVTNFFAASSRFGTPEELKSLVDKAHELGLTVLLDVVHSHASKNILDGINMYDGSDHLYFHEGGRGRHDQWDSRLFNYGQHEVLRFLLSNLRFWMDIYMFDGFRFDGVTSMMYKHHGIGSGFSGGYHEYFGDSVDLEAMVYLMLANAMLHETYPHVVTIAEDVSGMPTLCRPVAEGGVGFDYRLSMAIPDMWIKLLKEYTDDQWEMGQIVHNLTNRRHLEKSVAYAESHDQALVGDKTLAFWLMDKEMYDFMSDLSPLTPIIDRGLALHKMIRFIVHTLGGEAYLNFEGNEFGHPEWMDFPREGNGNSFAHARRQFNLVDDKLLRYKYLYEFDVAMNWLEDKYKWLNSPQAYVSLKHEGDKMIVFERAGLLFIFNFHPTQSFTDYRVGVDTAGEYKVILTSDETRFGGHNRIDMGGRYFTTPMEWNGRKNWLQVYSPSRTVLVLGL.

Residues W88 and K124 each coordinate (1,4-alpha-D-glucosyl)n. The active-site Nucleophile is the D342. Residue E397 is the Proton donor of the active site.

The protein belongs to the glycosyl hydrolase 13 family. GlgB subfamily.

The protein localises to the cytoplasm. It carries out the reaction Transfers a segment of a (1-&gt;4)-alpha-D-glucan chain to a primary hydroxy group in a similar glucan chain.. It participates in glycan biosynthesis; glycogen biosynthesis. Its function is as follows. Glycogen-branching enzyme participates in the glycogen biosynthetic process along with glycogenin and glycogen synthase. Generates alpha-1,6-glucosidic branches from alpha-1,4-linked glucose chains, to increase solubility of the glycogen polymer. This is 1,4-alpha-glucan-branching enzyme (GLC3) from Cryptococcus neoformans var. neoformans serotype D (strain B-3501A) (Filobasidiella neoformans).